Reading from the N-terminus, the 366-residue chain is tRNA-specific 2-thiouridylase MnmA (366 aa).

ATP-binding positions include 6–13 (AMSGGVDS) and leucine 32. Cysteine 101 serves as the catalytic Nucleophile. Residues cysteine 101 and cysteine 199 are joined by a disulfide bond. Glycine 125 is a binding site for ATP. Residues 148-150 (KDQ) are interaction with tRNA. The active-site Cysteine persulfide intermediate is the cysteine 199.

Belongs to the MnmA/TRMU family.

Its subcellular location is the cytoplasm. The catalysed reaction is S-sulfanyl-L-cysteinyl-[protein] + uridine(34) in tRNA + AH2 + ATP = 2-thiouridine(34) in tRNA + L-cysteinyl-[protein] + A + AMP + diphosphate + H(+). Its function is as follows. Catalyzes the 2-thiolation of uridine at the wobble position (U34) of tRNA, leading to the formation of s(2)U34. This is tRNA-specific 2-thiouridylase MnmA from Leifsonia xyli subsp. xyli (strain CTCB07).